The chain runs to 51 residues: Defensin-like protein 1 (51 aa).

Gln1 carries the post-translational modification Pyrrolidone carboxylic acid. 4 disulfides stabilise this stretch: Cys4/Cys51, Cys15/Cys36, Cys21/Cys45, and Cys25/Cys47.

As to quaternary structure, forms oligomers in its native state.

Its function is as follows. Possesses antifungal activity sensitive to inorganic cations. This Sinapis alba (White mustard) protein is Defensin-like protein 1.